Here is a 24-residue protein sequence, read N- to C-terminus: Retinol-binding protein 3 (24 aa).

It is found in the secreted. Its subcellular location is the extracellular space. The protein localises to the extracellular matrix. It localises to the interphotoreceptor matrix. Functionally, IRBP shuttles 11-cis and all trans retinoids between the retinol isomerase in the pigment epithelium and the visual pigments in the photoreceptor cells of the retina. This Ovis aries (Sheep) protein is Retinol-binding protein 3 (RBP3).